A 646-amino-acid polypeptide reads, in one-letter code: Mitochondrial distribution and morphology protein 10 (646 aa).

Disordered regions lie at residues 206–230 (KSTS…SLSN) and 315–347 (ETSS…GGGL). The span at 207 to 230 (STSSSMDRLDSSNPSLSSSTSLSN) shows a compositional bias: low complexity. The segment covering 315-333 (ETSSSASYPQRNGSVLHTG) has biased composition (polar residues).

The protein belongs to the MDM10 family. As to quaternary structure, component of the ER-mitochondria encounter structure (ERMES) or MDM complex, composed of MMM1, MDM10, MDM12 and MDM34. Associates with the mitochondrial outer membrane sorting assembly machinery SAM(core) complex.

The protein resides in the mitochondrion outer membrane. Its function is as follows. Component of the ERMES/MDM complex, which serves as a molecular tether to connect the endoplasmic reticulum and mitochondria. Components of this complex are involved in the control of mitochondrial shape and protein biogenesis and may function in phospholipid exchange. MDM10 is involved in the late assembly steps of the general translocase of the mitochondrial outer membrane (TOM complex). Functions in the TOM40-specific route of the assembly of outer membrane beta-barrel proteins, including the association of TOM40 with the receptor TOM22 and small TOM proteins. Can associate with the SAM(core) complex as well as the MDM12-MMM1 complex, both involved in late steps of the major beta-barrel assembly pathway, that is responsible for biogenesis of all outer membrane beta-barrel proteins. May act as a switch that shuttles between both complexes and channels precursor proteins into the TOM40-specific pathway. Plays a role in mitochondrial morphology and in the inheritance of mitochondria. The sequence is that of Mitochondrial distribution and morphology protein 10 from Mycosarcoma maydis (Corn smut fungus).